Consider the following 185-residue polypeptide: dCTP deaminase (185 aa).

DCTP contacts are provided by residues K107 to R112, T131 to E133, Q152, Y166, and Q176. E133 serves as the catalytic Proton donor/acceptor.

This sequence belongs to the dCTP deaminase family. In terms of assembly, homotrimer.

The catalysed reaction is dCTP + H2O + H(+) = dUTP + NH4(+). The protein operates within pyrimidine metabolism; dUMP biosynthesis; dUMP from dCTP (dUTP route): step 1/2. Functionally, catalyzes the deamination of dCTP to dUTP. This is dCTP deaminase from Anaplasma phagocytophilum (strain HZ).